Consider the following 145-residue polypeptide: Large ribosomal subunit protein uL11 (145 aa).

This sequence belongs to the universal ribosomal protein uL11 family. As to quaternary structure, part of the ribosomal stalk of the 50S ribosomal subunit. Interacts with L10 and the large rRNA to form the base of the stalk. L10 forms an elongated spine to which L12 dimers bind in a sequential fashion forming a multimeric L10(L12)X complex. Post-translationally, one or more lysine residues are methylated.

In terms of biological role, forms part of the ribosomal stalk which helps the ribosome interact with GTP-bound translation factors. In Rickettsia felis (strain ATCC VR-1525 / URRWXCal2) (Rickettsia azadi), this protein is Large ribosomal subunit protein uL11.